Consider the following 153-residue polypeptide: uncharacterized protein (153 aa).

This is an uncharacterized protein from Saccharomyces cerevisiae (strain ATCC 204508 / S288c) (Baker's yeast).